A 443-amino-acid polypeptide reads, in one-letter code: Histidinol dehydrogenase (443 aa).

Residues Tyr-141, Gln-203, and Asn-226 each contribute to the NAD(+) site. 3 residues coordinate substrate: Ser-249, Gln-271, and His-274. The Zn(2+) site is built by Gln-271 and His-274. Catalysis depends on proton acceptor residues Glu-339 and His-340. Positions 340, 373, 427, and 432 each coordinate substrate. Asp-373 is a Zn(2+) binding site. His-432 contributes to the Zn(2+) binding site.

It belongs to the histidinol dehydrogenase family. It depends on Zn(2+) as a cofactor.

The catalysed reaction is L-histidinol + 2 NAD(+) + H2O = L-histidine + 2 NADH + 3 H(+). It functions in the pathway amino-acid biosynthesis; L-histidine biosynthesis; L-histidine from 5-phospho-alpha-D-ribose 1-diphosphate: step 9/9. Functionally, catalyzes the sequential NAD-dependent oxidations of L-histidinol to L-histidinaldehyde and then to L-histidine. In Chlorobium luteolum (strain DSM 273 / BCRC 81028 / 2530) (Pelodictyon luteolum), this protein is Histidinol dehydrogenase.